The following is a 659-amino-acid chain: Homeobox protein slou (659 aa).

A compositionally biased stretch (polar residues) spans 1-21 (MVMLQSPAQKASDSASAQNTA). Disordered regions lie at residues 1–63 (MVML…PAAK), 94–152 (MSSE…SFSS), 198–298 (AQQH…AAPS), 316–349 (TQAS…PSGR), 376–440 (QIAA…DRDA), and 455–548 (PNKF…PRRA). Low complexity-rich tracts occupy residues 27–51 (SPNS…SVVS), 95–108 (SSES…LSPL), and 120–135 (HNNN…NSNT). Residues 136–152 (RRSQSPPASVGSVSFSS) are compositionally biased toward polar residues. The span at 201–232 (HMHHHQHQHHQHPAHPHSHQHPHPHPHPHPHP) shows a compositional bias: basic residues. A run of 7 repeats spans residues 221–222 (HP), 223–224 (HP), 225–226 (HP), 227–228 (HP), 229–230 (HP), 231–232 (HP), and 233–234 (HP). Positions 221–234 (HPHPHPHPHPHPHP) are 7 X 2 AA tandem repeats of H-P. Pro residues-rich tracts occupy residues 250–263 (PPSP…PPTS) and 275–286 (PIAPPQNPPHSS). 2 stretches are compositionally biased toward low complexity: residues 287 to 298 (QPPQQQQVAAPS) and 316 to 347 (TQAS…GSPS). Positions 388–401 (SEELNVDGNDEDSN) are enriched in acidic residues. The span at 417-435 (RSVNSSAAANPSSASTSAS) shows a compositional bias: low complexity. 2 stretches are compositionally biased toward acidic residues: residues 478–492 (RDEE…DQSE) and 500–519 (NDMD…DPSS). The segment covering 528 to 543 (SRNGDGKSGGGGGGGS) has biased composition (gly residues). A DNA-binding region (homeobox) is located at residues 545-604 (PRRARTAFTYEQLVSLENKFKTTRYLSVCERLNLALSLSLTETQVKIWFQNRRTKWKKQN).

It belongs to the NK-1 homeobox family. Mesodermal precursor cells of distinct muscles during embryogenesis, a subset of neuronal cells of the CNS and their precursors and also in cells of a small region of the midgut.

The protein localises to the nucleus. May play a role in specifying the identity of particular somatic muscles and neurons of the CNS. This chain is Homeobox protein slou (slou), found in Drosophila melanogaster (Fruit fly).